Reading from the N-terminus, the 240-residue chain is Ditrans,polycis-undecaprenyl-diphosphate synthase ((2E,6E)-farnesyl-diphosphate specific) (240 aa).

The active site involves aspartate 18. Position 18 (aspartate 18) interacts with Mg(2+). Substrate-binding positions include 19-22 (GNGR), tryptophan 23, arginine 31, histidine 35, and 63-65 (SSE). Catalysis depends on asparagine 66, which acts as the Proton acceptor. Substrate-binding positions include tryptophan 67, arginine 69, arginine 186, and 192–194 (RIS). Glutamate 205 contacts Mg(2+).

This sequence belongs to the UPP synthase family. Homodimer. The cofactor is Mg(2+).

The enzyme catalyses 8 isopentenyl diphosphate + (2E,6E)-farnesyl diphosphate = di-trans,octa-cis-undecaprenyl diphosphate + 8 diphosphate. Functionally, catalyzes the sequential condensation of isopentenyl diphosphate (IPP) with (2E,6E)-farnesyl diphosphate (E,E-FPP) to yield (2Z,6Z,10Z,14Z,18Z,22Z,26Z,30Z,34E,38E)-undecaprenyl diphosphate (di-trans,octa-cis-UPP). UPP is the precursor of glycosyl carrier lipid in the biosynthesis of bacterial cell wall polysaccharide components such as peptidoglycan and lipopolysaccharide. This chain is Ditrans,polycis-undecaprenyl-diphosphate synthase ((2E,6E)-farnesyl-diphosphate specific), found in Pasteurella multocida (strain Pm70).